A 117-amino-acid chain; its full sequence is Large ribosomal subunit protein uL18 (117 aa).

Belongs to the universal ribosomal protein uL18 family. Part of the 50S ribosomal subunit; part of the 5S rRNA/L5/L18/L25 subcomplex. Contacts the 5S and 23S rRNAs.

Its function is as follows. This is one of the proteins that bind and probably mediate the attachment of the 5S RNA into the large ribosomal subunit, where it forms part of the central protuberance. This chain is Large ribosomal subunit protein uL18, found in Vibrio campbellii (strain ATCC BAA-1116).